Consider the following 244-residue polypeptide: tRNA (guanine-N(7)-)-methyltransferase (244 aa).

Positions 74, 99, 126, and 149 each coordinate S-adenosyl-L-methionine. Asp-149 is a catalytic residue. Residues Lys-153, Asp-185, and 222–225 (TKFE) contribute to the substrate site.

It belongs to the class I-like SAM-binding methyltransferase superfamily. TrmB family.

The enzyme catalyses guanosine(46) in tRNA + S-adenosyl-L-methionine = N(7)-methylguanosine(46) in tRNA + S-adenosyl-L-homocysteine. The protein operates within tRNA modification; N(7)-methylguanine-tRNA biosynthesis. In terms of biological role, catalyzes the formation of N(7)-methylguanine at position 46 (m7G46) in tRNA. This Colwellia psychrerythraea (strain 34H / ATCC BAA-681) (Vibrio psychroerythus) protein is tRNA (guanine-N(7)-)-methyltransferase.